The primary structure comprises 100 residues: Urease subunit gamma (100 aa).

It belongs to the urease gamma subunit family. As to quaternary structure, heterotrimer of UreA (gamma), UreB (beta) and UreC (alpha) subunits. Three heterotrimers associate to form the active enzyme.

It is found in the cytoplasm. It catalyses the reaction urea + 2 H2O + H(+) = hydrogencarbonate + 2 NH4(+). It functions in the pathway nitrogen metabolism; urea degradation; CO(2) and NH(3) from urea (urease route): step 1/1. In Mycobacterium ulcerans (strain Agy99), this protein is Urease subunit gamma.